A 223-amino-acid polypeptide reads, in one-letter code: Ribose-5-phosphate isomerase A (223 aa).

Substrate contacts are provided by residues threonine 29–threonine 32, aspartate 82–aspartate 85, and lysine 95–glycine 98. The active-site Proton acceptor is the glutamate 104. Substrate is bound at residue lysine 122.

Belongs to the ribose 5-phosphate isomerase family. As to quaternary structure, homodimer.

The enzyme catalyses aldehydo-D-ribose 5-phosphate = D-ribulose 5-phosphate. The protein operates within carbohydrate degradation; pentose phosphate pathway; D-ribose 5-phosphate from D-ribulose 5-phosphate (non-oxidative stage): step 1/1. In terms of biological role, catalyzes the reversible conversion of ribose-5-phosphate to ribulose 5-phosphate. The sequence is that of Ribose-5-phosphate isomerase A from Neisseria meningitidis serogroup B (strain ATCC BAA-335 / MC58).